Here is a 242-residue protein sequence, read N- to C-terminus: uncharacterized protein (242 aa).

An N-terminal signal peptide occupies residues 1-17; the sequence is MKFSPAYLLAFAPIVAA. N-linked (GlcNAc...) asparagine glycosylation is found at asparagine 47, asparagine 86, asparagine 122, asparagine 159, and asparagine 178. The interval 176 to 214 is disordered; sequence NANESTADGQAQSGSSGSSSDSGSHSGHSSATQTSSTTA. Positions 180 to 214 are enriched in low complexity; sequence STADGQAQSGSSGSSSDSGSHSGHSSATQTSSTTA. Alanine 218 is lipidated: GPI-like-anchor amidated alanine. The propeptide at 219 to 242 is removed in mature form; that stretch reads GAVALETAAWGILGAAVVGGLAVL.

In terms of processing, the GPI-like anchor contains a phosphoceramide lipid group. The anchor position has not been determined.

It is found in the cell membrane. This is an uncharacterized protein from Aspergillus fumigatus (strain ATCC MYA-4609 / CBS 101355 / FGSC A1100 / Af293) (Neosartorya fumigata).